Reading from the N-terminus, the 177-residue chain is Probable inosine/xanthosine triphosphatase (177 aa).

This sequence belongs to the YjjX NTPase family. As to quaternary structure, homodimer. It depends on Mg(2+) as a cofactor. The cofactor is Mn(2+).

The catalysed reaction is XTP + H2O = XDP + phosphate + H(+). The enzyme catalyses ITP + H2O = IDP + phosphate + H(+). Its function is as follows. Phosphatase that hydrolyzes non-canonical purine nucleotides such as XTP and ITP to their respective diphosphate derivatives. Probably excludes non-canonical purines from DNA/RNA precursor pool, thus preventing their incorporation into DNA/RNA and avoiding chromosomal lesions. This chain is Probable inosine/xanthosine triphosphatase, found in Pyrobaculum arsenaticum (strain DSM 13514 / JCM 11321 / PZ6).